A 609-amino-acid chain; its full sequence is UvrABC system protein C (609 aa).

Positions 15–92 (TGSGVYQMQD…IKQFRPRYNV (78 aa)) constitute a GIY-YIG domain. The 36-residue stretch at 202-237 (DQVIIKLTERMEVASENLVFEEAAHYRDQIRQLRRL) folds into the UVR domain.

The protein belongs to the UvrC family. As to quaternary structure, interacts with UvrB in an incision complex.

Its subcellular location is the cytoplasm. Functionally, the UvrABC repair system catalyzes the recognition and processing of DNA lesions. UvrC both incises the 5' and 3' sides of the lesion. The N-terminal half is responsible for the 3' incision and the C-terminal half is responsible for the 5' incision. This Coxiella burnetii (strain RSA 331 / Henzerling II) protein is UvrABC system protein C.